The chain runs to 267 residues: MKFTVASRGDTLSDELCDTIKTRLLAADLAHDSDKPDIVITVGGDGTFLEAFHSYAHRLEETAFVGIHTGHLGFYADWVPEETEHLITHIIKTPFQIVEYPLLEVVIRYRGGQREPRRHLALNESTIKSTEGSLVCTVEIKGEAFETFRGDGLCMSTPSGSTAYNKALGGAILHPSLASIQLSEMASINNRIYRTLGSPLVLPQHHTCLLKLLNDVSVQVTIDHFNVPVFAENVDTIQVRVAEEKVRFARFRPFPFWKRVKEAFISE.

D45 (proton acceptor) is an active-site residue. NAD(+) contacts are provided by residues 45–46, 123–124, R149, D151, A186, and N226; these read DG and NE.

It belongs to the NAD kinase family. A divalent metal cation serves as cofactor.

It localises to the cytoplasm. It catalyses the reaction NAD(+) + ATP = ADP + NADP(+) + H(+). Its function is as follows. Involved in the regulation of the intracellular balance of NAD and NADP, and is a key enzyme in the biosynthesis of NADP. Catalyzes specifically the phosphorylation on 2'-hydroxyl of the adenosine moiety of NAD to yield NADP. This Shouchella clausii (strain KSM-K16) (Alkalihalobacillus clausii) protein is NAD kinase.